A 118-amino-acid chain; its full sequence is Large ribosomal subunit protein bL20 (118 aa).

The protein belongs to the bacterial ribosomal protein bL20 family.

Functionally, binds directly to 23S ribosomal RNA and is necessary for the in vitro assembly process of the 50S ribosomal subunit. It is not involved in the protein synthesizing functions of that subunit. This Edwardsiella ictaluri (strain 93-146) protein is Large ribosomal subunit protein bL20.